We begin with the raw amino-acid sequence, 295 residues long: Acetylglutamate kinase (295 aa).

Substrate contacts are provided by residues 61-62, Arg83, and Asn187; that span reads GG.

The protein belongs to the acetylglutamate kinase family. ArgB subfamily.

It localises to the cytoplasm. It carries out the reaction N-acetyl-L-glutamate + ATP = N-acetyl-L-glutamyl 5-phosphate + ADP. It functions in the pathway amino-acid biosynthesis; L-arginine biosynthesis; N(2)-acetyl-L-ornithine from L-glutamate: step 2/4. In terms of biological role, catalyzes the ATP-dependent phosphorylation of N-acetyl-L-glutamate. This Methanocorpusculum labreanum (strain ATCC 43576 / DSM 4855 / Z) protein is Acetylglutamate kinase.